An 82-amino-acid chain; its full sequence is Putative membrane protein insertion efficiency factor (82 aa).

The protein belongs to the UPF0161 family.

The protein localises to the cell membrane. Its function is as follows. Could be involved in insertion of integral membrane proteins into the membrane. The chain is Putative membrane protein insertion efficiency factor from Streptococcus uberis (strain ATCC BAA-854 / 0140J).